The sequence spans 1435 residues: Sterol 3-beta-glucosyltransferase (1435 aa).

Disordered stretches follow at residues 1-26 (MAPD…HQVA), 75-107 (SDEE…KFEG), 123-169 (RFSS…KDTP), and 185-206 (PSFE…RTSP). Polar residues predominate over residues 85-99 (TRQSSESHINRSSID). A compositionally biased stretch (low complexity) spans 123 to 133 (RFSSRSKSKSS). Positions 134–143 (NTIARGSRTP) are enriched in polar residues. A compositionally biased stretch (basic and acidic residues) spans 189-206 (MPRKSKDPAEVDDERTSP). The GRAM 1 domain occupies 211–258 (ERLMEIFKFETPEDVLEEYPCWLMKSVLLQGYMYITTKHICFYAYLPK). The 99-residue stretch at 262–360 (EVVKSGYLSK…WVKALQKIIF (99 aa)) folds into the PH domain. Disordered regions lie at residues 444–477 (LSTA…PNAP), 527–594 (DLNR…QASA), 610–671 (QHSP…QAEI), and 727–759 (GKKH…ATPA). A compositionally biased stretch (basic and acidic residues) spans 527–537 (DLNRLTTEHHR). 3 stretches are compositionally biased toward polar residues: residues 539 to 554 (NSAN…STNR), 628 to 647 (KSRS…TRTQ), and 657 to 671 (TTGS…QAEI). The span at 729-742 (KHYEEPHGIPRDNE) shows a compositional bias: basic and acidic residues. In terms of domain architecture, GRAM 2 spans 760–826 (DRFRDHFALP…KDIENVDKEK (67 aa)). 10 residues coordinate UDP-alpha-D-glucose: S949, R950, D952, A1252, H1254, H1267, G1271, T1272, D1291, and Q1292.

Belongs to the glycosyltransferase 28 family.

The protein resides in the cytoplasm. It localises to the preautophagosomal structure membrane. The catalysed reaction is a sterol + UDP-alpha-D-glucose = a sterol 3-beta-D-glucoside + UDP + H(+). It catalyses the reaction ergosterol + UDP-alpha-D-glucose = ergosteryl 3-beta-D-glucoside + UDP + H(+). Functionally, sterol glycosyltransferase responsible for the glycosylation of ergosterol to form ergosterol-glucoside. The chain is Sterol 3-beta-glucosyltransferase from Sclerotinia sclerotiorum (strain ATCC 18683 / 1980 / Ss-1) (White mold).